Consider the following 139-residue polypeptide: Putative nickel-responsive regulator (139 aa).

Ni(2+) contacts are provided by histidine 79, histidine 90, histidine 92, and cysteine 98.

Belongs to the transcriptional regulatory CopG/NikR family. It depends on Ni(2+) as a cofactor.

Its function is as follows. Transcriptional regulator. The chain is Putative nickel-responsive regulator from Trichlorobacter lovleyi (strain ATCC BAA-1151 / DSM 17278 / SZ) (Geobacter lovleyi).